Consider the following 525-residue polypeptide: Asparagine synthetase [glutamine-hydrolyzing] (525 aa).

Cys-2 serves as the catalytic For GATase activity. One can recognise a Glutamine amidotransferase type-2 domain in the interval 2–185; sequence CGILAVLGCS…PGHLYSSKEG (184 aa). Residues 50–54, 75–77, and Asp-98 contribute to the L-glutamine site; these read RLAII and NGE. Positions 193–517 constitute an Asparagine synthetase domain; the sequence is PPWFSEVIPS…QIDSPWRSKC (325 aa). Residues Leu-231, Val-267, and 341–342 contribute to the ATP site; that span reads SG.

It catalyses the reaction L-aspartate + L-glutamine + ATP + H2O = L-asparagine + L-glutamate + AMP + diphosphate + H(+). It functions in the pathway amino-acid biosynthesis; L-asparagine biosynthesis; L-asparagine from L-aspartate (L-Gln route): step 1/1. Could play a role in remobilization of nitrogen in flowers during senescence. The chain is Asparagine synthetase [glutamine-hydrolyzing] (AND1) from Sandersonia aurantiaca (Christmas-bells).